We begin with the raw amino-acid sequence, 196 residues long: ATP-dependent Clp protease proteolytic subunit 1 (196 aa).

Ser-96 serves as the catalytic Nucleophile. His-121 is a catalytic residue.

This sequence belongs to the peptidase S14 family. In terms of assembly, fourteen ClpP subunits assemble into 2 heptameric rings which stack back to back to give a disk-like structure with a central cavity, resembling the structure of eukaryotic proteasomes.

The protein localises to the cytoplasm. It catalyses the reaction Hydrolysis of proteins to small peptides in the presence of ATP and magnesium. alpha-casein is the usual test substrate. In the absence of ATP, only oligopeptides shorter than five residues are hydrolyzed (such as succinyl-Leu-Tyr-|-NHMec, and Leu-Tyr-Leu-|-Tyr-Trp, in which cleavage of the -Tyr-|-Leu- and -Tyr-|-Trp bonds also occurs).. Functionally, cleaves peptides in various proteins in a process that requires ATP hydrolysis. Has a chymotrypsin-like activity. Plays a major role in the degradation of misfolded proteins. This is ATP-dependent Clp protease proteolytic subunit 1 from Prochlorococcus marinus (strain NATL2A).